We begin with the raw amino-acid sequence, 606 residues long: CDPK-related kinase 8 (606 aa).

Residues 1–14 are compositionally biased toward polar residues; it reads MGGCTSKPSTSSGR. The segment at 1-132 is disordered; that stretch reads MGGCTSKPST…TEVPQREEEE (132 aa). G2 carries N-myristoyl glycine lipidation. Basic residues predominate over residues 98–110; sequence KHIRAALRRRKGK. One can recognise a Protein kinase domain in the interval 150–412; sequence VELGEEIGRG…ASQALMHPWI (263 aa). ATP contacts are provided by residues 156-164 and K182; that span reads IGRGHFGYT. D278 acts as the Proton acceptor in catalysis. Residue S318 is modified to Phosphoserine. Residues 418 to 448 form an autoinhibitory domain region; that stretch reads DMNIPFDILIFRQMKAYLRSSSLRKAALRAL. Residues 437 to 457 form a calmodulin binding (CaMBD) region; sequence SSSLRKAALRALSKTLIKDEI. 4 consecutive EF-hand domains span residues 455–491, 492–527, 528–567, and 570–599; these read DEILYLKTQFSLLAPNKDGLITMDTIRMALASNATEA, MKESRIPEFLALLNGLQYRGMDFEEFCAAAINVHQH, ESLDCWEQSIRHAYELFDKNGNRAIVIEELASELGVGPSI, and HSVLHDWIRHTDGKLSFFGFVKLLHGVSVR. N470, D472, E516, D545, N547, N549, E556, D581, and K583 together coordinate Ca(2+). S585 carries the phosphoserine modification.

The protein belongs to the protein kinase superfamily. Ser/Thr protein kinase family. CDPK subfamily. As to quaternary structure, binds calmodulin (CaM) in a calcium-dependent manner. In terms of processing, autophosphorylated.

The protein resides in the membrane. It carries out the reaction L-seryl-[protein] + ATP = O-phospho-L-seryl-[protein] + ADP + H(+). It catalyses the reaction L-threonyl-[protein] + ATP = O-phospho-L-threonyl-[protein] + ADP + H(+). Activated by calcium and calmodulin. Autophosphorylation may play an important role in the regulation of the kinase activity. Functionally, may play a role in signal transduction pathways that involve calcium as a second messenger. The protein is CDPK-related kinase 8 (CRK8) of Arabidopsis thaliana (Mouse-ear cress).